Consider the following 92-residue polypeptide: Cell division protein FtsL (92 aa).

Topologically, residues 1-3 (MGR) are cytoplasmic. The chain crosses the membrane as a helical span at residues 4–21 (ISLIVAALLMLSAISLVT). The Periplasmic segment spans residues 22 to 92 (SRYQSRQLFI…YMNQPAGGAQ (71 aa)).

This sequence belongs to the FtsL family. Part of a complex composed of FtsB, FtsL and FtsQ.

Its subcellular location is the cell inner membrane. Essential cell division protein. May link together the upstream cell division proteins, which are predominantly cytoplasmic, with the downstream cell division proteins, which are predominantly periplasmic. The protein is Cell division protein FtsL of Bordetella pertussis (strain Tohama I / ATCC BAA-589 / NCTC 13251).